The primary structure comprises 220 residues: Putative amino-acid transporter YisU (220 aa).

6 helical membrane-spanning segments follow: residues 15 to 35 (FFSMNAIIHGIVLAFGLILPL), 67 to 87 (TLLIVLAVAGVSVIVQELPVF), 89 to 109 (TVMMAGGFLFLLYMGWVTWNI), 128 to 148 (AFAAAVSLLNPHAILDTIGVI), 161 to 181 (WLFMAACIAVSWIWFISLAIA), and 195 to 215 (MLIVNKCSAAVMWAAAGYFGV).

This sequence belongs to the LysE/ArgO transporter (TC 2.A.75) family.

The protein resides in the cell membrane. The protein is Putative amino-acid transporter YisU (yisU) of Bacillus subtilis (strain 168).